The sequence spans 613 residues: Probable potassium transport system protein Kup (613 aa).

11 helical membrane-spanning segments follow: residues 38–58 (VLGV…LKYL), 91–111 (WILV…GMIT), 128–148 (PSFG…LFLF), 159–179 (FFGP…LVEI), 206–226 (FLVL…YADM), 238–258 (WSLL…AVLL), 270–290 (ALVP…ATII), 328–348 (IYVP…VAGF), 357–377 (AYGV…YYVA), 387–407 (GLNL…GASV), and 410–430 (LFHG…LMLT).

The protein belongs to the HAK/KUP transporter (TC 2.A.72) family.

It is found in the cell inner membrane. It carries out the reaction K(+)(in) + H(+)(in) = K(+)(out) + H(+)(out). In terms of biological role, transport of potassium into the cell. Likely operates as a K(+):H(+) symporter. The polypeptide is Probable potassium transport system protein Kup (Chlorobaculum tepidum (strain ATCC 49652 / DSM 12025 / NBRC 103806 / TLS) (Chlorobium tepidum)).